The following is a 109-amino-acid chain: UPF0122 protein CLL_A1244 (109 aa).

Belongs to the UPF0122 family.

Functionally, might take part in the signal recognition particle (SRP) pathway. This is inferred from the conservation of its genetic proximity to ftsY/ffh. May be a regulatory protein. In Clostridium botulinum (strain Eklund 17B / Type B), this protein is UPF0122 protein CLL_A1244.